The chain runs to 397 residues: MIIKPRVRGFICVTTHPAGCAASVREQIAYVARRGPIERGPKKVLVIGASTGYGLAARIAAAFGVGAATLGVFFERAPADAKPGTAGWYNSAAFHDEAAARGLQATSVNGDAFSDEIKHKTIDAIRRDLGQVDLVVYSVAAPRRAHPKTGVTHQSTLKPIGHAVRLRGIDTDNEAIKETLLQPATPDEIADTVAVMGGEDWRMWIDALDAAGVLADGAKTTAFTYLGEQVTHDIYWNGSIGEAKKDLDRTVLALRDKLAARGGDARVSVLKAVVTQASSAIPMMPLYLSLLFKVMKARGTHEGCIEQVDGLLRDSLYGAQPHVDAEGRLRADRLELDPAVQARVLELWDQVTDDNLYTLTDFAGYKAEFLRLFGFGIDGVDYDAPVEPNVRIPNLIE.

NAD(+) contacts are provided by residues glycine 48–tyrosine 53, phenylalanine 74–glutamate 75, aspartate 111–alanine 112, and valine 139–alanine 140. Tyrosine 225 serves as a coordination point for substrate. Tyrosine 235 functions as the Proton donor in the catalytic mechanism. NAD(+)-binding positions include lysine 244 and valine 273–threonine 275.

This sequence belongs to the TER reductase family. In terms of assembly, monomer.

It carries out the reaction a 2,3-saturated acyl-[ACP] + NAD(+) = a (2E)-enoyl-[ACP] + NADH + H(+). Its pathway is lipid metabolism; fatty acid biosynthesis. Involved in the final reduction of the elongation cycle of fatty acid synthesis (FAS II). Catalyzes the reduction of a carbon-carbon double bond in an enoyl moiety that is covalently linked to an acyl carrier protein (ACP). The chain is Enoyl-[acyl-carrier-protein] reductase [NADH] from Burkholderia pseudomallei (strain K96243).